Here is a 3948-residue protein sequence, read N- to C-terminus: Equisetin synthetase eqxS (3948 aa).

In terms of domain architecture, Ketosynthase family 3 (KS3) spans 4-438 (SEPIAVIGSA…GTNAHAIIEA (435 aa)). Active-site for beta-ketoacyl synthase activity residues include C177, H316, and H358. The segment at 543-847 (IFTGQGTQWP…DTIEAISEGR (305 aa)) is malonyl-CoA:ACP transacylase (MAT) domain. Positions 931-1066 (HPLLGRRCHD…AQIKASLGAP (136 aa)) are N-terminal hotdog fold. The segment at 931-1233 (HPLLGRRCHD…MELVPFSPAT (303 aa)) is dehydratase (DH) domain. Residues 931-1235 (HPLLGRRCHD…LVPFSPATPA (305 aa)) enclose the PKS/mFAS DH domain. The active-site Proton acceptor; for dehydratase activity is the H964. A C-terminal hotdog fold region spans residues 1081 to 1235 (LRPVSVDRFY…LVPFSPATPA (155 aa)). The active-site Proton donor; for dehydratase activity is D1141. The tract at residues 1376 to 1574 (MLQDVYEQGF…GIDTTTPPVH (199 aa)) is methyltransferase (MT) domain. The interval 2105–2277 (TFLLVGLTGE…VAASSIDISS (173 aa)) is ketoreductase (KR) domain. Residues 2389–2464 (AIIKESFIVR…DLVDECLDLL (76 aa)) enclose the Carrier 1 domain. At S2424 the chain carries O-(pantetheine 4'-phosphoryl)serine. Residues 2480–2553 (QAAKPTTVIP…NSTDILAPPR (74 aa)) are disordered. 2 stretches are compositionally biased toward polar residues: residues 2487–2505 (VIPQ…QGTS) and 2513–2528 (GSDS…LTSW). Residues 2529-2541 (DRQDSSPPDKSDD) are compositionally biased toward basic and acidic residues. Residues 2564 to 2991 (SYGQAGFWFL…IRGSDKTVDA (428 aa)) are condensation (C) domain. Positions 3026–3424 (QVIQDNPDNI…DGLLFCDGRL (399 aa)) are adenylation (A) (KR) domain. The Carrier 2 domain maps to 3540–3617 (EILTPSEQRL…AMAGVLEDCG (78 aa)). S3577 is modified (O-(pantetheine 4'-phosphoryl)serine). Residues 3653–3870 (LTGSSGYLGR…MPVNEVVEAI (218 aa)) form a reductase (RED) domain region.

In the C-terminal section; belongs to the NRP synthetase family.

The catalysed reaction is L-serine + 7 malonyl-CoA + acetyl-CoA + 2 S-adenosyl-L-methionine + ATP + 8 NADPH + 11 H(+) = (5S)-3-[(2E,6R,8E,10E,12E)-2,6-dimethyltetradeca-2,8,10,12-tetraenoyl]-5-(hydroxymethyl)pyrrolidine-2,4-dione + AMP + 2 S-adenosyl-L-homocysteine + 7 CO2 + diphosphate + 8 NADP(+) + 8 CoA + 6 H2O. The protein operates within mycotoxin biosynthesis. Its function is as follows. Hybrid PKS-NRPS synthetase; part of the gene cluster that mediates the biosynthesis of equisetin, a trans-fused decalin-containing tetramic acid with antimicrobial activity. The PKS module of eqxS together with the enoylreductase eqxC catalyze the formation of the polyketide unit which is then conjugated to L-serine by the condensation domain of the eqxS NRPS module. Activity of the Dieckmann cyclase domain (RED) results in release of the Dieckmann product intermediate. Diels-Alderase eqx3 is involved in endo-selective Diels-Alder cycloaddition to form the decalin ring, leading to the production of N-desmethylequisetin also called trichosetin. Subsequent N-methylation is carried out by eqxD to give equisetin. The polypeptide is Equisetin synthetase eqxS (Fusarium heterosporum).